The primary structure comprises 439 residues: Glutamate-1-semialdehyde 2,1-aminomutase (439 aa).

Lys-279 is modified (N6-(pyridoxal phosphate)lysine).

This sequence belongs to the class-III pyridoxal-phosphate-dependent aminotransferase family. HemL subfamily. Homodimer. Pyridoxal 5'-phosphate is required as a cofactor.

The protein localises to the cytoplasm. The enzyme catalyses (S)-4-amino-5-oxopentanoate = 5-aminolevulinate. The protein operates within porphyrin-containing compound metabolism; protoporphyrin-IX biosynthesis; 5-aminolevulinate from L-glutamyl-tRNA(Glu): step 2/2. This chain is Glutamate-1-semialdehyde 2,1-aminomutase, found in Rhodopirellula baltica (strain DSM 10527 / NCIMB 13988 / SH1).